The chain runs to 325 residues: Fructose-1,6-bisphosphatase class 1 (325 aa).

4 residues coordinate Mg(2+): Glu-84, Asp-103, Leu-105, and Asp-106. Substrate is bound by residues 106-109 (DGSS), Asn-196, and Lys-262. Residue Glu-268 coordinates Mg(2+).

Belongs to the FBPase class 1 family. As to quaternary structure, homotetramer. It depends on Mg(2+) as a cofactor.

Its subcellular location is the cytoplasm. The enzyme catalyses beta-D-fructose 1,6-bisphosphate + H2O = beta-D-fructose 6-phosphate + phosphate. It participates in carbohydrate biosynthesis; gluconeogenesis. The chain is Fructose-1,6-bisphosphatase class 1 from Shewanella baltica (strain OS195).